Here is a 375-residue protein sequence, read N- to C-terminus: Alcohol dehydrogenase 1A (375 aa).

Serine 2 carries the post-translational modification N-acetylserine. Residue serine 23 is modified to Phosphoserine. Cysteine 47 contacts Zn(2+). 48 to 52 (GTDDH) contributes to the NAD(+) binding site. Zn(2+) is bound by residues histidine 68, cysteine 98, cysteine 101, cysteine 104, cysteine 112, and cysteine 175. Residues 200-205 (GLGGVG), aspartate 224, lysine 229, isoleucine 270, 293-295 (VGV), 318-320 (AIL), and arginine 370 contribute to the NAD(+) site.

Belongs to the zinc-containing alcohol dehydrogenase family. In terms of assembly, dimer of identical or heterodimer of closely related subunits alpha, beta, or gamma that are encoded by genes ADH1A, ADH1B, and ADH1C, respectively. The cofactor is Zn(2+).

It localises to the cytoplasm. It catalyses the reaction a primary alcohol + NAD(+) = an aldehyde + NADH + H(+). The catalysed reaction is a secondary alcohol + NAD(+) = a ketone + NADH + H(+). The enzyme catalyses butan-1-ol + NAD(+) = butanal + NADH + H(+). It carries out the reaction 1-propanol + NAD(+) = propanal + NADH + H(+). In terms of biological role, alcohol dehydrogenase. Oxidizes primary as well as secondary alcohols. Ethanol is a very poor substrate. The polypeptide is Alcohol dehydrogenase 1A (ADH1A) (Homo sapiens (Human)).